A 209-amino-acid chain; its full sequence is UPF0319 protein VF_1616 (209 aa).

The N-terminal stretch at Met-1–Ala-21 is a signal peptide.

It belongs to the UPF0319 family.

This is UPF0319 protein VF_1616 from Aliivibrio fischeri (strain ATCC 700601 / ES114) (Vibrio fischeri).